A 279-amino-acid polypeptide reads, in one-letter code: HTH-type transcriptional regulator BhcR (279 aa).

Over residues methionine 1–glycine 13 the composition is skewed to basic residues. Residues methionine 1–glutamate 21 are disordered. The 62-residue stretch at isoleucine 26–proline 87 folds into the HTH iclR-type domain. Positions leucine 47–valine 66 form a DNA-binding region, H-T-H motif. Residues leucine 102–proline 271 form the IclR-ED domain.

Functionally, transcriptional regulator of the bhc gene cluster involved in glycolate and glyoxylate assimilation via the beta-hydroxyaspartate cycle (BHAC). Glyoxylate negatively affects the interaction of BhcR with the promoter region of the bhc gene cluster. This chain is HTH-type transcriptional regulator BhcR, found in Paracoccus denitrificans (strain Pd 1222).